Here is a 636-residue protein sequence, read N- to C-terminus: p-hydroxybenzoate-m-hydroxylase (636 aa).

FAD is bound by residues 11–40 (DIVIVGAGPVGILLSLCMSRWGYKVKHIDN), 242–244 (RLY), Tyr-290, and Asp-311. Residues 12 to 33 (IVIVGAGPVGILLSLCMSRWGY) traverse the membrane as a helical segment. An N-linked (GlcNAc...) asparagine glycan is attached at Asn-573.

This sequence belongs to the PheA/TfdB FAD monooxygenase family. FAD is required as a cofactor.

The protein localises to the membrane. The catalysed reaction is 4-hydroxybenzoate + NADH + O2 + H(+) = 3,4-dihydroxybenzoate + NAD(+) + H2O. It carries out the reaction 4-hydroxybenzoate + NADPH + O2 + H(+) = 3,4-dihydroxybenzoate + NADP(+) + H2O. Functionally, FAD-dependent monooxygenase; part of the benzoic acid degradation pathway also known as the protocatechuic acid pathway. Benzoic acid debradation begins with the conversion of benzoic acid into 4-hydroxybenzoic acid through hydroxylation by the benzoate-4-monooxygenase bphA, and its partner NADPH-cytochrome P450 reductase cprA which act as a mediator in electron donation from NADPH. 4-Hydroxybenzoic acid is then converted into 3,4-dihydroxybenzoic acid (also called protocatechuic acid) by the p-hydroxybenzoate-m-hydroxylase phhA. Protocatechuic acid is converted into 3-carboxy-cis,cis-muconic acid by the intradiol ring-cleavage dioxygenase prcA, which is further metabolized through the 3-oxoadipate pathway to finally enter the tricarboxylic acid cycle (TCA). This chain is p-hydroxybenzoate-m-hydroxylase, found in Emericella nidulans (strain FGSC A4 / ATCC 38163 / CBS 112.46 / NRRL 194 / M139) (Aspergillus nidulans).